The chain runs to 260 residues: Proteasome subunit alpha 1 (260 aa).

Residues 237–260 (AEADLLDTGEDADDEAEDEDATEE) are disordered. Residues 240–260 (DLLDTGEDADDEAEDEDATEE) show a composition bias toward acidic residues.

Belongs to the peptidase T1A family. The 20S proteasome core is composed of 14 alpha and 14 beta subunits that assemble into four stacked heptameric rings, resulting in a barrel-shaped structure. The two inner rings, each composed of seven catalytic beta subunits, are sandwiched by two outer rings, each composed of seven alpha subunits. The catalytic chamber with the active sites is on the inside of the barrel. Has a gated structure, the ends of the cylinder being occluded by the N-termini of the alpha-subunits. Is capped at one or both ends by the proteasome regulatory ATPase, PAN.

It is found in the cytoplasm. With respect to regulation, the formation of the proteasomal ATPase PAN-20S proteasome complex, via the docking of the C-termini of PAN into the intersubunit pockets in the alpha-rings, triggers opening of the gate for substrate entry. Interconversion between the open-gate and close-gate conformations leads to a dynamic regulation of the 20S proteasome proteolysis activity. Its function is as follows. Component of the proteasome core, a large protease complex with broad specificity involved in protein degradation. The chain is Proteasome subunit alpha 1 from Haloarcula marismortui (strain ATCC 43049 / DSM 3752 / JCM 8966 / VKM B-1809) (Halobacterium marismortui).